Here is a 140-residue protein sequence, read N- to C-terminus: uncharacterized protein (140 aa).

Residues 21-42 form a C2H2-type zinc finger; sequence CPYCNYTNADVKAIKKHIKSKH.

This sequence to M.jannaschii MJECL27.

This is an uncharacterized protein from Methanocaldococcus jannaschii (strain ATCC 43067 / DSM 2661 / JAL-1 / JCM 10045 / NBRC 100440) (Methanococcus jannaschii).